We begin with the raw amino-acid sequence, 114 residues long: UPF0212 protein Mbur_0968 (114 aa).

It belongs to the UPF0212 family.

This chain is UPF0212 protein Mbur_0968, found in Methanococcoides burtonii (strain DSM 6242 / NBRC 107633 / OCM 468 / ACE-M).